Here is a 306-residue protein sequence, read N- to C-terminus: Porphobilinogen deaminase (306 aa).

Residue C239 is modified to S-(dipyrrolylmethanemethyl)cysteine.

This sequence belongs to the HMBS family. As to quaternary structure, monomer. Requires dipyrromethane as cofactor.

It carries out the reaction 4 porphobilinogen + H2O = hydroxymethylbilane + 4 NH4(+). The protein operates within porphyrin-containing compound metabolism; protoporphyrin-IX biosynthesis; coproporphyrinogen-III from 5-aminolevulinate: step 2/4. Functionally, tetrapolymerization of the monopyrrole PBG into the hydroxymethylbilane pre-uroporphyrinogen in several discrete steps. The protein is Porphobilinogen deaminase (hemC) of Helicobacter pylori (strain J99 / ATCC 700824) (Campylobacter pylori J99).